The primary structure comprises 328 residues: Lytic polysaccharide monooxygenase aasB (328 aa).

An N-terminal signal peptide occupies residues 1–18 (MKAFFAISASTLLATVHG). Histidine 19 contributes to the Cu(2+) binding site. A disulfide bond links cysteine 40 and cysteine 43. The N-linked (GlcNAc...) asparagine glycan is linked to asparagine 54. 6 disulfides stabilise this stretch: cysteine 66–cysteine 245, cysteine 102–cysteine 203, cysteine 118–cysteine 145, cysteine 153–cysteine 161, cysteine 167–cysteine 173, and cysteine 181–cysteine 192. A Cu(2+)-binding site is contributed by histidine 109. Cu(2+) is bound at residue tyrosine 242. Residue asparagine 306 is glycosylated (N-linked (GlcNAc...) asparagine).

Belongs to the polysaccharide monooxygenase AA13 family. Cu(2+) serves as cofactor.

The protein localises to the secreted. It catalyses the reaction starch + reduced acceptor + O2 = D-glucono-1,5-lactone-terminated malto-oligosaccharides + short-chain malto-oligosaccharides + acceptor + H2O.. Lytic polysaccharide monooxygenase involved in breakdown of granular resistant starch. In Emericella nidulans (strain FGSC A4 / ATCC 38163 / CBS 112.46 / NRRL 194 / M139) (Aspergillus nidulans), this protein is Lytic polysaccharide monooxygenase aasB.